A 179-amino-acid polypeptide reads, in one-letter code: MAKLHDYYRDQVVNELKAKFNYSSVMQVPRIEKITLNMGVGEALTDKKLLDNAVADLTAISGQKPLITKARKSVAGFKIRQGYPIGCKVTLRGERMWEFFERLITIAVPRIRDFRGLNAKSFDGRGNYSMGVREQIIFPEIDYDKVDRVRGLDITITTTAKSDEEGQALLAAFNFPFRK.

The protein belongs to the universal ribosomal protein uL5 family. Part of the 50S ribosomal subunit; part of the 5S rRNA/L5/L18/L25 subcomplex. Contacts the 5S rRNA and the P site tRNA. Forms a bridge to the 30S subunit in the 70S ribosome.

This is one of the proteins that bind and probably mediate the attachment of the 5S RNA into the large ribosomal subunit, where it forms part of the central protuberance. In the 70S ribosome it contacts protein S13 of the 30S subunit (bridge B1b), connecting the 2 subunits; this bridge is implicated in subunit movement. Contacts the P site tRNA; the 5S rRNA and some of its associated proteins might help stabilize positioning of ribosome-bound tRNAs. The chain is Large ribosomal subunit protein uL5 from Actinobacillus pleuropneumoniae serotype 5b (strain L20).